The following is a 175-amino-acid chain: MVSNWLDAAPRRVLALISAACIAMLAFGMYLQHVVGLEPCPMCIVQRYALIGVAVFTGLGSLRGGRGWWMTWGVLALLLSGFGAFVAARQSWLQWYPPEIATCGRDFYGMIENFPISRAIPMIFRGSGDCAAIDWTFLGGSIANWSFVCFVVMALVLLVMLLRAPRPARGGFSAA.

Topologically, residues 1–13 (MVSNWLDAAPRRV) are cytoplasmic. A helical transmembrane segment spans residues 14–30 (LALISAACIAMLAFGMY). The Periplasmic segment spans residues 31–48 (LQHVVGLEPCPMCIVQRY). A disulfide bond links Cys-40 and Cys-43. Residues 49–65 (ALIGVAVFTGLGSLRGG) form a helical membrane-spanning segment. Over 66–70 (RGWWM) the chain is Cytoplasmic. The helical transmembrane segment at 71–88 (TWGVLALLLSGFGAFVAA) threads the bilayer. The Periplasmic portion of the chain corresponds to 89–144 (RQSWLQWYPPEIATCGRDFYGMIENFPISRAIPMIFRGSGDCAAIDWTFLGGSIAN). A disulfide bridge connects residues Cys-103 and Cys-130. A helical transmembrane segment spans residues 145–163 (WSFVCFVVMALVLLVMLLR). Residues 164–175 (APRPARGGFSAA) are Cytoplasmic-facing.

Belongs to the DsbB family.

Its subcellular location is the cell inner membrane. In terms of biological role, required for disulfide bond formation in some periplasmic proteins. Acts by oxidizing the DsbA protein. The sequence is that of Disulfide bond formation protein B from Paracidovorax citrulli (strain AAC00-1) (Acidovorax citrulli).